The primary structure comprises 333 residues: Large ribosomal subunit protein mL39 (333 aa).

A TGS domain is found at 56-122; that stretch reads DKIEVRYLGL…QESCTLQLLN (67 aa). The disordered stretch occupies residues 311–333; sequence SKKPSPARLPNEPFEEQQQLQLS.

This sequence belongs to the mitochondrion-specific ribosomal protein mL39 family. As to quaternary structure, component of the mitochondrial ribosome large subunit (39S) which comprises a 16S rRNA and about 50 distinct proteins.

Its subcellular location is the mitochondrion. The chain is Large ribosomal subunit protein mL39 (mRpL39) from Drosophila melanogaster (Fruit fly).